Reading from the N-terminus, the 1713-residue chain is uncharacterized protein (1713 aa).

Residues 1 to 12 (MNENEFSTNSLI) show a composition bias toward polar residues. Disordered stretches follow at residues 1 to 35 (MNEN…INFG), 79 to 200 (QQLN…KLSN), 226 to 290 (GNNN…QPLS), 309 to 557 (QYLS…PMSH), 713 to 734 (SNDQ…KKDR), 808 to 952 (SPPM…SITT), and 1143 to 1190 (HHHH…SISR). Composition is skewed to low complexity over residues 13–35 (NQQG…INFG), 79–109 (QQLN…NNNN), 126–170 (NNSG…NSGN), 177–200 (NMSD…KLSN), and 226–264 (GNNN…GGNN). A compositionally biased stretch (basic residues) spans 265-276 (SHHHHNHSHHNS). Composition is skewed to low complexity over residues 317-470 (NNIN…SPAS) and 478-489 (SNNFGGNHNNYN). Positions 490-504 (HAHHSHHNNHAHHNT) are enriched in basic residues. Residues 505 to 553 (HNYNNNNNNNNNNNNNNNNNNNNSNNSNNNSNTNNNGNNGNNSNNNNNH) are compositionally biased toward low complexity. A DNA-binding region (NDT80) is located at residues 544–825 (GNNSNNNNNH…QNPGRFLNHD (282 aa)). The span at 822–832 (LNHDKSLKKDP) shows a compositional bias: basic and acidic residues. Positions 838-874 (GGKGGGGSGSGGMGGGMGGGMGNNGSSGSSSNGGYGN) are enriched in gly residues. 2 stretches are compositionally biased toward low complexity: residues 898-946 (SPTT…PTLT) and 1148-1189 (QQQQ…SSIS). The Peptidase S74 domain maps to 1240 to 1355 (SDQRIKSNIR…RSLKKEKDHI (116 aa)). A run of 3 helical transmembrane segments spans residues 1416-1436 (TMFV…FYLF), 1447-1467 (LMNF…TFYV), and 1473-1493 (LIIA…VGFF). Over residues 1596 to 1605 (NSNNNINNNN) the composition is skewed to low complexity. Disordered regions lie at residues 1596–1634 (NSNN…DFHE) and 1646–1665 (IKGK…SSSN). Residues 1617–1634 (FIDDFKKSSSNNHKDFHE) are compositionally biased toward basic and acidic residues.

It localises to the membrane. This is an uncharacterized protein from Dictyostelium discoideum (Social amoeba).